Consider the following 256-residue polypeptide: Lysine-rich coiled-coil protein 1 (256 aa).

Disordered stretches follow at residues Gln-61–Arg-83 and Gly-141–Phe-256. 2 stretches are compositionally biased toward polar residues: residues Pro-64–Gln-79 and Gly-141–Gln-153. Basic and acidic residues-rich tracts occupy residues His-161–Lys-188 and Lys-218–Glu-227. Residues Thr-208–Met-247 are a coiled coil.

The polypeptide is Lysine-rich coiled-coil protein 1 (Krcc1) (Rattus norvegicus (Rat)).